A 53-amino-acid chain; its full sequence is Abaecin (53 aa).

Residues 1-19 (MKVVIFIFALLATICAAFA) form the signal peptide.

It localises to the secreted. Functionally, this peptide has bactericidal activity. The polypeptide is Abaecin (Apis mellifera (Honeybee)).